A 66-amino-acid chain; its full sequence is UPF0337 protein BA_0987/GBAA_0987/BAS0923 (66 aa).

The tract at residues 1–22 (MSESGLKEQITGKVEKTKGQVK) is disordered. A compositionally biased stretch (basic and acidic residues) spans 13-22 (KVEKTKGQVK).

Belongs to the UPF0337 (CsbD) family.

The polypeptide is UPF0337 protein BA_0987/GBAA_0987/BAS0923 (Bacillus anthracis).